The chain runs to 173 residues: UPF0102 protein Psyc_1908 (173 aa).

It belongs to the UPF0102 family.

The chain is UPF0102 protein Psyc_1908 from Psychrobacter arcticus (strain DSM 17307 / VKM B-2377 / 273-4).